Reading from the N-terminus, the 527-residue chain is tRNA (uracil(54)-C(5))-methyltransferase (527 aa).

In terms of domain architecture, TRAM spans Pro-107–Glu-167. Residues Cys-182, Cys-188, Cys-191, and Cys-276 each contribute to the [4Fe-4S] cluster site. Residues Gln-347, Tyr-383, Glu-404, and Asp-451 each coordinate S-adenosyl-L-methionine. Cys-478 (nucleophile) is an active-site residue. Glu-517 functions as the Proton acceptor in the catalytic mechanism.

The protein belongs to the class I-like SAM-binding methyltransferase superfamily. RNA M5U methyltransferase family.

It carries out the reaction uridine(54) in tRNA + S-adenosyl-L-methionine = 5-methyluridine(54) in tRNA + S-adenosyl-L-homocysteine + H(+). Functionally, catalyzes the formation of 5-methyl-uridine at position 54 (m5U54) in all tRNA. May also have a role in tRNA stabilization or maturation. This chain is tRNA (uracil(54)-C(5))-methyltransferase, found in Schizosaccharomyces pombe (strain 972 / ATCC 24843) (Fission yeast).